A 202-amino-acid polypeptide reads, in one-letter code: Large ribosomal subunit protein mL40 (202 aa).

A disordered region spans residues 42-79; sequence IQHQQTASYASKGKSGPPAGMFSGQKAGSKKSKGPKQV.

The protein belongs to the mitochondrion-specific ribosomal protein mL40 family. In terms of assembly, component of the mitochondrial large ribosomal subunit (mt-LSU). Mature N.crassa 74S mitochondrial ribosomes consist of a small (37S) and a large (54S) subunit. The 37S small subunit contains a 16S ribosomal RNA (16S mt-rRNA) and 32 different proteins. The 54S large subunit contains a 23S rRNA (23S mt-rRNA) and 42 different proteins. mL40 is binding to NAD.

The protein localises to the mitochondrion. Its function is as follows. Component of the mitochondrial ribosome (mitoribosome), a dedicated translation machinery responsible for the synthesis of mitochondrial genome-encoded proteins, including at least some of the essential transmembrane subunits of the mitochondrial respiratory chain. The mitoribosomes are attached to the mitochondrial inner membrane and translation products are cotranslationally integrated into the membrane. This chain is Large ribosomal subunit protein mL40 (mrpl28), found in Neurospora crassa (strain ATCC 24698 / 74-OR23-1A / CBS 708.71 / DSM 1257 / FGSC 987).